The sequence spans 248 residues: Triosephosphate isomerase (248 aa).

9-11 (NWK) contributes to the substrate binding site. His94 acts as the Electrophile in catalysis. The Proton acceptor role is filled by Glu166. Substrate is bound by residues Gly172, Ser212, and 233–234 (GG).

It belongs to the triosephosphate isomerase family. As to quaternary structure, homodimer.

Its subcellular location is the cytoplasm. It catalyses the reaction D-glyceraldehyde 3-phosphate = dihydroxyacetone phosphate. The protein operates within carbohydrate biosynthesis; gluconeogenesis. Its pathway is carbohydrate degradation; glycolysis; D-glyceraldehyde 3-phosphate from glycerone phosphate: step 1/1. Functionally, involved in the gluconeogenesis. Catalyzes stereospecifically the conversion of dihydroxyacetone phosphate (DHAP) to D-glyceraldehyde-3-phosphate (G3P). The sequence is that of Triosephosphate isomerase from Thermoanaerobacter sp. (strain X514).